A 1068-amino-acid chain; its full sequence is TSC22 domain family protein 1 (1068 aa).

Positions 1 to 98 (MHQPPESTAA…SQAQLQAQPL (98 aa)) are required for interaction with TGFBR1 and promotion of TGF-beta signaling. 3 disordered regions span residues 23–110 (AHPA…KKSG), 125–288 (ISSN…SPAS), and 602–623 (YSQA…QQLQ). Residues 36-55 (GSASALNAAGTGVGSSATSS) show a composition bias toward low complexity. Positions 58–70 (FPPPSLLQPPPPA) are enriched in pro residues. The segment covering 84–100 (SLNLLSQAQLQAQPLAP) has biased composition (low complexity). The segment covering 133-142 (EDTESYDDLD) has biased composition (acidic residues). Residues 216–240 (HPHHLHHHHHIHHGHHLQHGHHHPS) show a composition bias toward basic residues. The span at 241–250 (HVAVASASIP) shows a compositional bias: low complexity. The span at 261–271 (KLSTTGSSDSI) shows a compositional bias: polar residues. Position 263 is a phosphoserine (serine 263). Positions 272–288 (TPVAPTSAVSSSGSPAS) are enriched in low complexity. Positions 609–620 (VQTPLPGAPPPQ) are enriched in pro residues. The tract at residues 1000 to 1021 (VLKEQIKELIEKNSQLEQENNL) is leucine-zipper. The interval 1032–1068 (AQFQAQLQTGSPPATTQPQGTTQPPAQPASQGSGPTA) is disordered. Residues 1039–1068 (QTGSPPATTQPQGTTQPPAQPASQGSGPTA) show a composition bias toward low complexity.

This sequence belongs to the TSC-22/Dip/Bun family. Forms homodimers. Forms heterodimers. Component of a complex composed of TSC22D1 (via N-terminus), TGFBR1 and TGFBR2; the interaction between TSC22D1 and TGFBR1 is inhibited by SMAD7 and promoted by TGFB1. Interacts with SMAD7; the interaction requires TGF-beta and the interaction is inhibited by TGFBR1. Interacts with TPT1/fortilin; interaction results in the destabilization of TSC22D1 protein and prevents TSC22D1-mediated apoptosis. Interacts with SMAD4 (via N-terminus). Interacts with ACVRL1/ALK1, ACVR1/ALK2, BMPR1A/ALK3, ACVR1B/ALK4, BMPR1B/ALK6, ACVR2A/ACTRII, and BMPR2. Interacts with SMAD6. Interacts with TFE3; the interaction is enhanced in the presence of TGF-beta. As to quaternary structure, forms a heterodimer with TSC22D4/THG1. In terms of assembly, forms a heterodimer with TSC22D4/THG1. Interacts with histone H1-2. Interacts with GNL3.

It localises to the cytoplasm. Its subcellular location is the nucleus. It is found in the cell membrane. The protein localises to the mitochondrion. Its function is as follows. Transcriptional repressor. Acts on the C-type natriuretic peptide (CNP) promoter. Acts to promote CASP3-mediated apoptosis. Positively regulates TGF-beta signaling by interacting with SMAD7 which inhibits binding of SMAD7 to TGFBR1, preventing recruitment of SMURF ubiquitin ligases to TGFBR1 and inhibiting SMURF-mediated ubiquitination and degradation of TGFBR1. Contributes to enhancement of TGF-beta signaling by binding to and modulating the transcription activator activity of SMAD4. Promotes TGF-beta-induced transcription of COL1A2; via its interaction with TFE3 at E-boxes in the gene proximal promoter. Plays a role in the repression of hematopoietic precursor cell growth. Promotes IL2 deprivation-induced apoptosis in T-lymphocytes, via repression of TSC22D3/GILZ transcription and activation of the caspase cascade. In terms of biological role, may act to negatively regulate TGFB3 signaling and thereby inhibit cell death in mammary gland cells. Functionally, positively regulates cell death in response to TGFB3 during mammary gland involution. This is TSC22 domain family protein 1 from Macaca fascicularis (Crab-eating macaque).